The chain runs to 142 residues: Large ribosomal subunit protein uL11 (142 aa).

The protein belongs to the universal ribosomal protein uL11 family. Part of the ribosomal stalk of the 50S ribosomal subunit. Interacts with L10 and the large rRNA to form the base of the stalk. L10 forms an elongated spine to which L12 dimers bind in a sequential fashion forming a multimeric L10(L12)X complex. In terms of processing, one or more lysine residues are methylated.

Its function is as follows. Forms part of the ribosomal stalk which helps the ribosome interact with GTP-bound translation factors. This Vibrio cholerae serotype O1 (strain ATCC 39541 / Classical Ogawa 395 / O395) protein is Large ribosomal subunit protein uL11.